A 180-amino-acid chain; its full sequence is Large ribosomal subunit protein uL16 (180 aa).

This sequence belongs to the universal ribosomal protein uL16 family.

This is Large ribosomal subunit protein uL16 from Pyrobaculum aerophilum (strain ATCC 51768 / DSM 7523 / JCM 9630 / CIP 104966 / NBRC 100827 / IM2).